We begin with the raw amino-acid sequence, 625 residues long: MEKKQFQAESKRLLEMMVNSIYSQKEIFLRELISNASDAIDKMYYRSLTDDSLSFEKDRYAIYVEADKDNRKLVMKDTGIGMTKEELEANLGTIAKSGSLAFKKETEIEDGHDIIGQFGVGFYAAFMVADKVTVITRSIDSDQAYKWESDGTDGYTIEPAEKEDVGTVITLHIKENTDDESYDEYLEEYRIKAIIKKYSDFIRYPIKMNVTVSKPKEDNEDEYAEYQEEQTINSMVPIWRKNKSELKDSDYEQFYQDKRYGFDKPLEHIHVSVDGAIRYNAILFIPEHTPFDYYSKEYEKGLELYANGVLIMEKCAELLPDYFSFVKGMVDSEDLSLNISREMLQHDRQLKLIAKNIKSKIKSQLKTMLKKEPDKYEKFYKAFGRQLKFGVYNDFGANKDDLQDLLLFYSSTEKKLVSLSDYVSRMKEGQTYIYYATGESNERIAKLPQTEMVADQGYEILYFTEDVDEFAIKMLRSYDEKEFMSVSSADLDIETDEKQEEETNSEENKKLFEKMKSILDGKVKDVRTSKRLKSHPVFLAADGEITLEMEKVLQAMPDNQNVKAEKVLEINPNHDVFHSLKQAYEEDEDKLKLYTNLLYNQALLIEGLPLEDPVEFSQNMCKVMV.

The segment at 1-341 (MEKKQFQAES…SEDLSLNISR (341 aa)) is a; substrate-binding. The b stretch occupies residues 342–551 (EMLQHDRQLK…DGEITLEMEK (210 aa)). Residues 552 to 625 (VLQAMPDNQN…FSQNMCKVMV (74 aa)) are c.

Belongs to the heat shock protein 90 family. In terms of assembly, homodimer.

It is found in the cytoplasm. Functionally, molecular chaperone. Has ATPase activity. The protein is Chaperone protein HtpG of Shouchella clausii (strain KSM-K16) (Alkalihalobacillus clausii).